The following is a 219-amino-acid chain: 7-cyano-7-deazaguanine synthase (219 aa).

Position 10–20 (10–20 (FSGGQDSTTCL)) interacts with ATP. The Zn(2+) site is built by cysteine 188, cysteine 197, cysteine 200, and cysteine 203.

Belongs to the QueC family. In terms of assembly, homodimer. Requires Zn(2+) as cofactor.

The enzyme catalyses 7-carboxy-7-deazaguanine + NH4(+) + ATP = 7-cyano-7-deazaguanine + ADP + phosphate + H2O + H(+). It participates in purine metabolism; 7-cyano-7-deazaguanine biosynthesis. Functionally, catalyzes the ATP-dependent conversion of 7-carboxy-7-deazaguanine (CDG) to 7-cyano-7-deazaguanine (preQ(0)). In Clostridium botulinum (strain Kyoto / Type A2), this protein is 7-cyano-7-deazaguanine synthase.